The chain runs to 169 residues: Calcium-binding protein G (169 aa).

4 consecutive EF-hand domains span residues 9–44 (KIFQ…KMNG), 60–83 (VDMD…QAKK), 92–127 (AALA…QGYN), and 133–162 (DYVL…KRLA). Residues D105, D107, D109, K111, E116, D140, D142, D144, Y146, and E151 each coordinate Ca(2+).

The sequence is that of Calcium-binding protein G (cbpG) from Dictyostelium discoideum (Social amoeba).